The sequence spans 261 residues: MTWKQNETEIRQRIKEGQYDGPTTGLMNGFTQANLVILPQNLAYDFLLFCQRNPKPCPLLEVIDTGKYEPKETAPGKDLRTDLPRYYIYRDGVKSAEVTDINKYWTQDLVSFLLGCSFTFESFFLQRGVPVRHIEEGVNVPMYRTNIKCKDAGVFHGNMVVSMRPIPENKLTEAIQITSRFPAVHGAPIHIGSPEKIGIKDLDSPDFGNRVNVESGEIPVFWACGVTPQAVIMNYRPEFVITHAPGHMFITDKKDMDYFQL.

This sequence belongs to the D-glutamate cyclase family.

This Natranaerobius thermophilus (strain ATCC BAA-1301 / DSM 18059 / JW/NM-WN-LF) protein is Putative hydro-lyase Nther_1142.